Here is a 152-residue protein sequence, read N- to C-terminus: Transcriptional regulator MraZ (152 aa).

SpoVT-AbrB domains follow at residues valine 5–glutamate 51 and alanine 80–leucine 123.

The protein belongs to the MraZ family. Forms oligomers.

It is found in the cytoplasm. Its subcellular location is the nucleoid. This chain is Transcriptional regulator MraZ, found in Methylococcus capsulatus (strain ATCC 33009 / NCIMB 11132 / Bath).